The sequence spans 173 residues: MDITIQHPWFKRALGSLYPSRLFDQFFGEGLFEYDLLPFLSSTISPYYRQSLFRTVLESGISEVRSDRDKFVIFLDVKHFSPEDLTVKVLDDFVEIHGKHSERQDDHGYISREFHRRYRLPSNVDQSAISCSLSADGMLTFSGPKIHSDMDASHSDRSIPVSREEKPTLAPSS.

Met-1 carries the post-translational modification N-acetylmethionine. The segment at 1–63 (MDITIQHPWF…RTVLESGISE (63 aa)) is required for complex formation with BFSP1 and BFSP2. A Deamidated glutamine; partial modification is found at Gln-6. A Phosphoserine modification is found at Ser-45. Deamidated glutamine; partial is present on Gln-50. The region spanning 52–164 (LFRTVLESGI…SDRSIPVSRE (113 aa)) is the sHSP domain. 2 positions are modified to N6-acetyllysine: Lys-70 and Lys-99. Residues His-100, Glu-102, and His-107 each coordinate Zn(2+). The residue at position 122 (Ser-122) is a Phosphoserine. Deamidated asparagine; partial is present on Asn-123. Basic and acidic residues predominate over residues 146–167 (IHSDMDASHSDRSIPVSREEKP). Residues 146–173 (IHSDMDASHSDRSIPVSREEKPTLAPSS) are disordered. His-154 provides a ligand contact to Zn(2+). Ser-162 is a glycosylation site (O-linked (GlcNAc) serine).

Belongs to the small heat shock protein (HSP20) family. In terms of assembly, heteromer composed of three CRYAA and one CRYAB subunits. Inter-subunit bridging via zinc ions enhances stability, which is crucial as there is no protein turn over in the lens. Can also form homodimers and homotetramers (dimers of dimers) which serve as the building blocks of homooligomers. Within homooligomers, the zinc-binding motif is created from residues of 3 different molecules. His-100 and Glu-102 from one molecule are ligands of the zinc ion, and His-107 and His-154 residues from additional molecules complete the site with tetrahedral coordination geometry. Part of a complex required for lens intermediate filament formation composed of BFSP1, BFSP2 and CRYAA. Acetylation at Lys-70 may increase chaperone activity. In terms of processing, undergoes age-dependent proteolytical cleavage at the C-terminus.

The protein localises to the cytoplasm. Its subcellular location is the nucleus. Functionally, contributes to the transparency and refractive index of the lens. Acts as a chaperone, preventing aggregation of various proteins under a wide range of stress conditions. Required for the correct formation of lens intermediate filaments as part of a complex composed of BFSP1, BFSP2 and CRYAA. This Osphranter rufus (Red kangaroo) protein is Alpha-crystallin A chain (CRYAA).